Here is a 69-residue protein sequence, read N- to C-terminus: MNNIIDSSKYRLNRCIPSVFGDTNTPHITSSMIIDVLYVGKIYERCRLGCRTRTQGMFRVVLNAQLNIQ.

This is an uncharacterized protein from Saccharomyces cerevisiae (strain ATCC 204508 / S288c) (Baker's yeast).